The chain runs to 200 residues: dITP/XTP pyrophosphatase (200 aa).

7 to 12 (TSNKHK) contributes to the substrate binding site. The Mg(2+) site is built by Glu-38 and Asp-73. The Proton acceptor role is filled by Asp-73. Residues Ser-74, 154 to 157 (FGYD), Lys-177, and 182 to 183 (HR) each bind substrate.

The protein belongs to the HAM1 NTPase family. Homodimer. The cofactor is Mg(2+).

It catalyses the reaction XTP + H2O = XMP + diphosphate + H(+). The enzyme catalyses dITP + H2O = dIMP + diphosphate + H(+). It carries out the reaction ITP + H2O = IMP + diphosphate + H(+). In terms of biological role, pyrophosphatase that catalyzes the hydrolysis of nucleoside triphosphates to their monophosphate derivatives, with a high preference for the non-canonical purine nucleotides XTP (xanthosine triphosphate), dITP (deoxyinosine triphosphate) and ITP. Seems to function as a house-cleaning enzyme that removes non-canonical purine nucleotides from the nucleotide pool, thus preventing their incorporation into DNA/RNA and avoiding chromosomal lesions. This Campylobacter jejuni subsp. jejuni serotype O:6 (strain 81116 / NCTC 11828) protein is dITP/XTP pyrophosphatase.